A 139-amino-acid polypeptide reads, in one-letter code: Transcription antitermination protein NusB (139 aa).

The protein belongs to the NusB family.

In terms of biological role, involved in transcription antitermination. Required for transcription of ribosomal RNA (rRNA) genes. Binds specifically to the boxA antiterminator sequence of the ribosomal RNA (rrn) operons. The chain is Transcription antitermination protein NusB from Edwardsiella ictaluri (strain 93-146).